A 240-amino-acid chain; its full sequence is Lactate utilization protein C (240 aa).

Belongs to the LutC/YkgG family.

Functionally, is involved in L-lactate degradation and allows cells to grow with lactate as the sole carbon source. This is Lactate utilization protein C from Bacillus pumilus (strain SAFR-032).